Consider the following 89-residue polypeptide: Progonadoliberin-1 (89 aa).

A signal peptide spans 1 to 23 (MKAFPTFALLFLVLLFSAHVSDA). Gln24 is subject to Pyrrolidone carboxylic acid. Gly33 bears the Glycine amide mark.

It belongs to the GnRH family. As to expression, expressed in the forebrain from larval stages.

It localises to the secreted. In terms of biological role, stimulates the secretion of gonadotropins. This chain is Progonadoliberin-1 (gnrh1), found in Xenopus laevis (African clawed frog).